We begin with the raw amino-acid sequence, 338 residues long: Tryptophan--tRNA ligase (338 aa).

Residues 11 to 13 (QPS) and 19 to 20 (GN) each bind ATP. The short motif at 12–20 (PSGELSIGN) is the 'HIGH' region element. Aspartate 135 is a binding site for L-tryptophan. Residues 147–149 (GSD), valine 189, and 198–202 (KMSKS) contribute to the ATP site. The 'KMSKS' region signature appears at 198–202 (KMSKS).

Belongs to the class-I aminoacyl-tRNA synthetase family. Homodimer.

It is found in the cytoplasm. It carries out the reaction tRNA(Trp) + L-tryptophan + ATP = L-tryptophyl-tRNA(Trp) + AMP + diphosphate + H(+). Functionally, catalyzes the attachment of tryptophan to tRNA(Trp). This is Tryptophan--tRNA ligase from Vibrio vulnificus (strain CMCP6).